A 268-amino-acid chain; its full sequence is Exopolysaccharide production negative regulator (268 aa).

Positions 1–22 (MRAGELKSLRVAVLGMSLAVGA) are cleaved as a signal peptide.

Functionally, negatively modulates exopolysaccharide (EPS) biosynthesis. This is Exopolysaccharide production negative regulator (exoR) from Rhizobium meliloti (strain 1021) (Ensifer meliloti).